A 442-amino-acid chain; its full sequence is Cysteine proteinase 4 (442 aa).

The N-terminal stretch at 1-17 (MRVLSFLCLLLVSYASA) is a signal peptide. The propeptide at 18–111 (KQQFSELQYR…TEEEKIFSTP (94 aa)) is activation peptide. Cystine bridges form between C132–C178 and C169–C212. The active site involves C135. N228 and N254 each carry an N-linked (GlcNAc...) asparagine glycan. The cysteines at positions 270 and 428 are disulfide-linked. H277 is an active-site residue. A disordered region spans residues 286–396 (SGSSSSSGSS…SGSGSGAVEA (111 aa)). The span at 287–376 (GSSSSSGSSS…SASGQASASG (90 aa)) shows a compositional bias: low complexity. Gly residues predominate over residues 377 to 391 (SGSGSGSGSGSGSGS). N406 is an active-site residue.

The protein belongs to the peptidase C1 family. Glycosylated; contains GlcNAc-alpha-1-P-Ser residues and fucose.

It is found in the lysosome. This is Cysteine proteinase 4 (cprD) from Dictyostelium discoideum (Social amoeba).